A 241-amino-acid polypeptide reads, in one-letter code: Queuine tRNA-ribosyltransferase-like protein (241 aa).

The protein belongs to the queuine tRNA-ribosyltransferase family.

The protein is Queuine tRNA-ribosyltransferase-like protein of Plasmodium falciparum.